The chain runs to 189 residues: Large ribosomal subunit protein eL18 (189 aa).

This sequence belongs to the eukaryotic ribosomal protein eL18 family.

It localises to the cytoplasm. In Anopheles gambiae (African malaria mosquito), this protein is Large ribosomal subunit protein eL18 (RpL18).